The primary structure comprises 363 residues: DNA primase small subunit PriS (363 aa).

Catalysis depends on residues D105, D107, and D265.

Belongs to the eukaryotic-type primase small subunit family. As to quaternary structure, heterodimer of a small subunit (PriS) and a large subunit (PriL). The cofactor is Mg(2+). Mn(2+) serves as cofactor.

Functionally, catalytic subunit of DNA primase, an RNA polymerase that catalyzes the synthesis of short RNA molecules used as primers for DNA polymerase during DNA replication. The small subunit contains the primase catalytic core and has DNA synthesis activity on its own. Binding to the large subunit stabilizes and modulates the activity, increasing the rate of DNA synthesis while decreasing the length of the DNA fragments, and conferring RNA synthesis capability. The DNA polymerase activity may enable DNA primase to also catalyze primer extension after primer synthesis. May also play a role in DNA repair. The polypeptide is DNA primase small subunit PriS (Methanococcus maripaludis (strain C7 / ATCC BAA-1331)).